We begin with the raw amino-acid sequence, 412 residues long: Enhancer of translation termination 1 (412 aa).

The segment at 1–45 (MAKRPLGLGKQSREKKRKVESVEKKSDEPSRESTPVRSQMSVELD) is disordered. The segment covering 17–31 (RKVESVEKKSDEPSR) has biased composition (basic and acidic residues). The residue at position 30 (S30) is a Phosphoserine. Residues 32–41 (ESTPVRSQMS) are compositionally biased toward polar residues.

Belongs to the ETT1 family. In terms of assembly, interacts with STM1.

Its subcellular location is the nucleus. Its function is as follows. Required for correct translation termination and probably involved in regulation of hypoxic gene expression in association TPA1. Inhibits replication of Brome mosaic virus. This Saccharomyces cerevisiae (strain JAY291) (Baker's yeast) protein is Enhancer of translation termination 1 (ETT1).